The primary structure comprises 316 residues: Beta-ketoacyl-[acyl-carrier-protein] synthase III (316 aa).

Residues Cys-112 and His-243 contribute to the active site. The segment at 244–248 (QANLR) is ACP-binding. Asn-273 is a catalytic residue.

This sequence belongs to the thiolase-like superfamily. FabH family. In terms of assembly, homodimer.

Its subcellular location is the cytoplasm. It catalyses the reaction malonyl-[ACP] + acetyl-CoA + H(+) = 3-oxobutanoyl-[ACP] + CO2 + CoA. Its pathway is lipid metabolism; fatty acid biosynthesis. Its function is as follows. Catalyzes the condensation reaction of fatty acid synthesis by the addition to an acyl acceptor of two carbons from malonyl-ACP. Catalyzes the first condensation reaction which initiates fatty acid synthesis and may therefore play a role in governing the total rate of fatty acid production. Possesses both acetoacetyl-ACP synthase and acetyl transacylase activities. Its substrate specificity determines the biosynthesis of branched-chain and/or straight-chain of fatty acids. This Histophilus somni (strain 129Pt) (Haemophilus somnus) protein is Beta-ketoacyl-[acyl-carrier-protein] synthase III.